We begin with the raw amino-acid sequence, 319 residues long: Lipoyl synthase (319 aa).

The [4Fe-4S] cluster site is built by cysteine 61, cysteine 66, cysteine 72, cysteine 87, cysteine 91, cysteine 94, and serine 300. Residues 73 to 289 (WDKKHATFMI…ESVAYSKGFL (217 aa)) form the Radical SAM core domain.

It belongs to the radical SAM superfamily. Lipoyl synthase family. [4Fe-4S] cluster is required as a cofactor.

Its subcellular location is the cytoplasm. It carries out the reaction [[Fe-S] cluster scaffold protein carrying a second [4Fe-4S](2+) cluster] + N(6)-octanoyl-L-lysyl-[protein] + 2 oxidized [2Fe-2S]-[ferredoxin] + 2 S-adenosyl-L-methionine + 4 H(+) = [[Fe-S] cluster scaffold protein] + N(6)-[(R)-dihydrolipoyl]-L-lysyl-[protein] + 4 Fe(3+) + 2 hydrogen sulfide + 2 5'-deoxyadenosine + 2 L-methionine + 2 reduced [2Fe-2S]-[ferredoxin]. It participates in protein modification; protein lipoylation via endogenous pathway; protein N(6)-(lipoyl)lysine from octanoyl-[acyl-carrier-protein]: step 2/2. Catalyzes the radical-mediated insertion of two sulfur atoms into the C-6 and C-8 positions of the octanoyl moiety bound to the lipoyl domains of lipoate-dependent enzymes, thereby converting the octanoylated domains into lipoylated derivatives. The chain is Lipoyl synthase from Rhodopseudomonas palustris (strain BisB18).